A 311-amino-acid polypeptide reads, in one-letter code: Cathepsin B (311 aa).

The signal sequence occupies residues 1–19; that stretch reads MRVLLSLVVILFIINSAFA. The propeptide occupies 20–78; the sequence is VKINIGRPTKSHKTIHHETWVEEQTDQFDNIKVGQLLGFKRSPNRPKLQIKSYDPLGVQ. Asparagine 91 carries an N-linked (GlcNAc...) asparagine glycan. Disulfide bonds link cysteine 92–cysteine 121, cysteine 104–cysteine 145, cysteine 138–cysteine 191, cysteine 167–cysteine 195, and cysteine 175–cysteine 182. The active site involves cysteine 107. A glycan (N-linked (GlcNAc...) asparagine) is linked at asparagine 198. Active-site residues include histidine 261 and asparagine 281. N-linked (GlcNAc...) asparagine glycosylation occurs at asparagine 290.

This sequence belongs to the peptidase C1 family.

It is found in the lysosome. It catalyses the reaction Hydrolysis of proteins with broad specificity for peptide bonds. Preferentially cleaves -Arg-Arg-|-Xaa bonds in small molecule substrates (thus differing from cathepsin L). In addition to being an endopeptidase, shows peptidyl-dipeptidase activity, liberating C-terminal dipeptides.. Functionally, thiol protease which is believed to participate in intracellular degradation and turnover of proteins. This Dictyostelium discoideum (Social amoeba) protein is Cathepsin B (ctsB).